We begin with the raw amino-acid sequence, 256 residues long: Isoprenyl transferase (256 aa).

The tract at residues 1–22 is disordered; that stretch reads MLEKFSKWKGNRSNHTTPSHSL. Residue D36 is part of the active site. D36 is a binding site for Mg(2+). Substrate-binding positions include 37 to 40, W41, R49, H53, and 81 to 83; these read GNGR and STE. The active-site Proton acceptor is the N84. Substrate-binding positions include W85, R87, R204, and 210 to 212; that span reads RLS. E223 serves as a coordination point for Mg(2+).

Belongs to the UPP synthase family. Homodimer. It depends on Mg(2+) as a cofactor.

Its function is as follows. Catalyzes the condensation of isopentenyl diphosphate (IPP) with allylic pyrophosphates generating different type of terpenoids. The polypeptide is Isoprenyl transferase (Halalkalibacterium halodurans (strain ATCC BAA-125 / DSM 18197 / FERM 7344 / JCM 9153 / C-125) (Bacillus halodurans)).